Reading from the N-terminus, the 378-residue chain is Putative protein YbfL (378 aa).

Belongs to the transposase 11 family.

The polypeptide is Putative protein YbfL (ybfL) (Escherichia coli (strain K12)).